The chain runs to 91 residues: Small ribosomal subunit protein uS19 (91 aa).

Belongs to the universal ribosomal protein uS19 family.

Protein S19 forms a complex with S13 that binds strongly to the 16S ribosomal RNA. The protein is Small ribosomal subunit protein uS19 of Janthinobacterium sp. (strain Marseille) (Minibacterium massiliensis).